Here is a 333-residue protein sequence, read N- to C-terminus: Phosphate acyltransferase (333 aa).

The protein belongs to the PlsX family. In terms of assembly, homodimer. Probably interacts with PlsY.

The protein resides in the cytoplasm. It carries out the reaction a fatty acyl-[ACP] + phosphate = an acyl phosphate + holo-[ACP]. It functions in the pathway lipid metabolism; phospholipid metabolism. Its function is as follows. Catalyzes the reversible formation of acyl-phosphate (acyl-PO(4)) from acyl-[acyl-carrier-protein] (acyl-ACP). This enzyme utilizes acyl-ACP as fatty acyl donor, but not acyl-CoA. In Pelagibacter ubique (strain HTCC1062), this protein is Phosphate acyltransferase.